Here is a 241-residue protein sequence, read N- to C-terminus: Alpha/beta-tubulin-N-acetyltransferase 9 (241 aa).

The region spanning 34-181 (EELRHLTASE…VTLRLAVSEP (148 aa)) is the N-acetyltransferase domain.

Belongs to the acetyltransferase family. GNAT subfamily.

It catalyses the reaction N-terminal L-methionyl-[tubulin] + acetyl-CoA = N-terminal N(alpha)-acetyl-L-methionyl-[tubulin] + CoA + H(+). Functionally, N-acetyltransferase that mediates the acetylation of the N-terminal residues of alpha- and beta-tubulin. The polypeptide is Alpha/beta-tubulin-N-acetyltransferase 9 (Nat9) (Mus musculus (Mouse)).